The primary structure comprises 232 residues: Sec-independent protein translocase protein TatB (232 aa).

A helical transmembrane segment spans residues Met-1 to Gly-21. 2 disordered regions span residues Glu-108–Pro-129 and Ala-176–Arg-232. 2 stretches are compositionally biased toward low complexity: residues Ala-189–Ala-203 and Arg-214–Arg-232.

This sequence belongs to the TatB family. In terms of assembly, the Tat system comprises two distinct complexes: a TatABC complex, containing multiple copies of TatA, TatB and TatC subunits, and a separate TatA complex, containing only TatA subunits. Substrates initially bind to the TatABC complex, which probably triggers association of the separate TatA complex to form the active translocon.

It localises to the cell inner membrane. Functionally, part of the twin-arginine translocation (Tat) system that transports large folded proteins containing a characteristic twin-arginine motif in their signal peptide across membranes. Together with TatC, TatB is part of a receptor directly interacting with Tat signal peptides. TatB may form an oligomeric binding site that transiently accommodates folded Tat precursor proteins before their translocation. This is Sec-independent protein translocase protein TatB from Sodalis glossinidius (strain morsitans).